The sequence spans 228 residues: Thiamine-phosphate synthase (228 aa).

4-amino-2-methyl-5-(diphosphooxymethyl)pyrimidine-binding positions include 57–61 (QLRDK) and Asn-89. Mg(2+)-binding residues include Asp-90 and Asp-109. Ser-128 serves as a coordination point for 4-amino-2-methyl-5-(diphosphooxymethyl)pyrimidine. 154–156 (TPS) lines the 2-[(2R,5Z)-2-carboxy-4-methylthiazol-5(2H)-ylidene]ethyl phosphate pocket. Lys-157 is a binding site for 4-amino-2-methyl-5-(diphosphooxymethyl)pyrimidine. Residues Gly-185 and 205–206 (IS) contribute to the 2-[(2R,5Z)-2-carboxy-4-methylthiazol-5(2H)-ylidene]ethyl phosphate site.

This sequence belongs to the thiamine-phosphate synthase family. The cofactor is Mg(2+).

It catalyses the reaction 2-[(2R,5Z)-2-carboxy-4-methylthiazol-5(2H)-ylidene]ethyl phosphate + 4-amino-2-methyl-5-(diphosphooxymethyl)pyrimidine + 2 H(+) = thiamine phosphate + CO2 + diphosphate. The catalysed reaction is 2-(2-carboxy-4-methylthiazol-5-yl)ethyl phosphate + 4-amino-2-methyl-5-(diphosphooxymethyl)pyrimidine + 2 H(+) = thiamine phosphate + CO2 + diphosphate. The enzyme catalyses 4-methyl-5-(2-phosphooxyethyl)-thiazole + 4-amino-2-methyl-5-(diphosphooxymethyl)pyrimidine + H(+) = thiamine phosphate + diphosphate. The protein operates within cofactor biosynthesis; thiamine diphosphate biosynthesis; thiamine phosphate from 4-amino-2-methyl-5-diphosphomethylpyrimidine and 4-methyl-5-(2-phosphoethyl)-thiazole: step 1/1. In terms of biological role, condenses 4-methyl-5-(beta-hydroxyethyl)thiazole monophosphate (THZ-P) and 2-methyl-4-amino-5-hydroxymethyl pyrimidine pyrophosphate (HMP-PP) to form thiamine monophosphate (TMP). The protein is Thiamine-phosphate synthase of Roseiflexus castenholzii (strain DSM 13941 / HLO8).